Reading from the N-terminus, the 444-residue chain is Abhydrolase domain-containing protein abhd-5.2 (444 aa).

One can recognise an AB hydrolase-1 domain in the interval 162–409 (PIVLIHGFGA…SAGHHVYADD (248 aa)).

The protein belongs to the peptidase S33 family. ABHD4/ABHD5 subfamily. In terms of assembly, interacts with atgl-1; the interaction tethers atgl-1 to lipid droplets. In terms of tissue distribution, expressed in the hypodermis and intestine.

It is found in the lipid droplet. Acts coordinately with phospholipase atgl-1 within the lipolytic cascade to distribute stored energy to tissues to maintain energy levels during the dauer phase. Localizes atgl-1 to lipid droplets, possibly to facilitate triglyceride hydrolysis. Regulates lipid droplet size, lipid content, the exchange of lipids between lipid droplets and fusion of lipid droplets during the dauer phase. This is Abhydrolase domain-containing protein abhd-5.2 from Caenorhabditis elegans.